The following is a 371-amino-acid chain: Putative glutamate--cysteine ligase 2 (371 aa).

Belongs to the glutamate--cysteine ligase type 2 family. YbdK subfamily.

It carries out the reaction L-cysteine + L-glutamate + ATP = gamma-L-glutamyl-L-cysteine + ADP + phosphate + H(+). Its function is as follows. ATP-dependent carboxylate-amine ligase which exhibits weak glutamate--cysteine ligase activity. The protein is Putative glutamate--cysteine ligase 2 of Paraburkholderia xenovorans (strain LB400).